A 132-amino-acid chain; its full sequence is Small ribosomal subunit protein uS9 (132 aa).

Residues leucine 100–arginine 132 are disordered. Over residues glutamate 114–arginine 132 the composition is skewed to basic residues.

Belongs to the universal ribosomal protein uS9 family.

This chain is Small ribosomal subunit protein uS9, found in Dehalococcoides mccartyi (strain ATCC BAA-2266 / KCTC 15142 / 195) (Dehalococcoides ethenogenes (strain 195)).